The sequence spans 299 residues: Epimerase family protein SERP0438 (299 aa).

This sequence belongs to the NAD(P)-dependent epimerase/dehydratase family. SDR39U1 subfamily.

The polypeptide is Epimerase family protein SERP0438 (Staphylococcus epidermidis (strain ATCC 35984 / DSM 28319 / BCRC 17069 / CCUG 31568 / BM 3577 / RP62A)).